The primary structure comprises 322 residues: Deoxyhypusine hydroxylase (322 aa).

Residues His-78, Glu-79, His-111, and Glu-112 each contribute to the Fe cation site. HEAT-like PBS-type repeat units follow at residues 109–135 (VRHE…CLKN), 203–229 (LRYR…GFND), 234–260 (FKHE…VLGR), and 267–293 (VRHE…YLND). 4 residues coordinate Fe cation: His-236, Glu-237, His-269, and Glu-270.

It belongs to the deoxyhypusine hydroxylase family. Requires Fe(2+) as cofactor.

It localises to the cytoplasm. Its subcellular location is the nucleus. The enzyme catalyses [eIF5A protein]-deoxyhypusine + AH2 + O2 = [eIF5A protein]-hypusine + A + H2O. It participates in protein modification; eIF5A hypusination. In terms of biological role, catalyzes the hydroxylation of the N(6)-(4-aminobutyl)-L-lysine intermediate to form hypusine, an essential post-translational modification only found in mature eIF-5A factor. This Candida glabrata (strain ATCC 2001 / BCRC 20586 / JCM 3761 / NBRC 0622 / NRRL Y-65 / CBS 138) (Yeast) protein is Deoxyhypusine hydroxylase.